Consider the following 87-residue polypeptide: U3-theraphotoxin-Hhn1n (87 aa).

Residues 1 to 24 form the signal peptide; sequence MVNMKASMFLTFAGLVLLFVVCYA. The propeptide occupies 25–52; it reads SESEEKEFPKEMLSSIFAVDNDFKQEER. 3 disulfides stabilise this stretch: Cys-54-Cys-67, Cys-61-Cys-72, and Cys-66-Cys-79.

This sequence belongs to the neurotoxin 10 (Hwtx-1) family. 51 (Hntx-8) subfamily. Hntx-8 sub-subfamily. Expressed by the venom gland.

The protein localises to the secreted. Weakly inhibits Kv11.1/KCNH2/ERG1, Kv1.2/KCNA2, Kv1.3/KCNA3, and Kv2.1/KCNB1. This Cyriopagopus hainanus (Chinese bird spider) protein is U3-theraphotoxin-Hhn1n.